Reading from the N-terminus, the 201-residue chain is Superoxide dismutase [Mn/Fe] (201 aa).

His-27, His-81, Asp-162, and His-166 together coordinate Fe(3+). The Mn(2+) site is built by His-27, His-81, Asp-162, and His-166.

The protein belongs to the iron/manganese superoxide dismutase family. In terms of assembly, homodimer. Mn(2+) serves as cofactor. Requires Fe(3+) as cofactor.

The catalysed reaction is 2 superoxide + 2 H(+) = H2O2 + O2. Destroys superoxide anion radicals which are normally produced within the cells and which are toxic to biological systems. Catalyzes the dismutation of superoxide anion radicals into O2 and H2O2 by successive reduction and oxidation of the transition metal ion at the active site. The protein is Superoxide dismutase [Mn/Fe] (sodA) of Staphylococcus carnosus.